Consider the following 1875-residue polypeptide: Neuron navigator 1 (1875 aa).

N-acetylmethionine is present on Met1. The interval 1-63 (MLGSSVKSVQ…GGSGSMAKAS (63 aa)) is disordered. Residues Ser93 and Ser145 each carry the phosphoserine modification. Disordered regions lie at residues 115-230 (SDDM…EERA) and 280-339 (SSLR…VGGS). Position 162 is a phosphothreonine (Thr162). Ser197 and Ser202 each carry phosphoserine. Positions 258–283 (ESQRKRTVQNVLDLRQNLEETMSSLR) form a coiled coil. Residues 280–291 (SSLRGSQVTHSS) show a composition bias toward polar residues. A phosphoserine mark is found at Ser299, Ser311, Ser315, Ser365, and Ser394. Positions 304–318 (PRSVSSLSNRSSPLS) are enriched in low complexity. Disordered stretches follow at residues 391–463 (GYMS…RTDS) and 477–783 (SESE…AELP). Composition is skewed to low complexity over residues 414-428 (DESSSISSGLSDASD) and 436-456 (NASSSLNSLPTTPTASRRSST). Phosphoserine occurs at positions 455, 477, 479, and 493. A compositionally biased stretch (basic and acidic residues) spans 479 to 489 (SEEKTPKKLEY). Positions 506–522 (ERPESCDDASKGGELKK) are enriched in basic and acidic residues. Position 531 is a phosphoserine (Ser531). Thr537 is modified (phosphothreonine). Position 544 is a phosphoserine (Ser544). Phosphothreonine is present on Thr547. Basic and acidic residues predominate over residues 558 to 569 (GKPEGKATDKGK). Thr575 bears the Phosphothreonine mark. Positions 584-594 (AGRDRLSDAKK) are enriched in basic and acidic residues. 2 stretches are compositionally biased toward polar residues: residues 618–638 (GTATVMQTGSSATLSKIQKSS) and 648–658 (RKTSLDVSNSV). Ser651 carries the post-translational modification Phosphoserine. Position 690 is an omega-N-methylarginine (Arg690). 2 stretches are compositionally biased toward polar residues: residues 696 to 712 (VSSSIDPSLLSTKQGGL) and 726 to 735 (GRSTPAPVNQ). Residues 733–758 (VNQTDREKEKAKAKAVALDSDNISLK) adopt a coiled-coil conformation. A phosphoserine mark is found at Ser752, Ser756, Ser762, Ser799, and Ser810. Positions 753–772 (DNISLKSIGSPESTPKNQAS) are enriched in polar residues. 2 disordered regions span residues 800–840 (LANL…PLPS) and 893–982 (MSLP…SPPA). Composition is skewed to low complexity over residues 807 to 818 (NSNSLDLPSSSD) and 893 to 902 (MSLPSAFPSS). A Phosphoserine modification is found at Ser998. Phosphothreonine is present on Thr1004. A coiled-coil region spans residues 1070-1161 (SSAEERMQSE…SEAQAVIQGA (92 aa)). Thr1168 carries the post-translational modification Phosphothreonine. Disordered regions lie at residues 1172–1202 (LRIKRQNSSDSISSLNSITSHSSIGSSKDAD), 1242–1306 (ATPD…KEVS), 1359–1381 (VAPGPSSGCTPGQVPGSSALSSP), and 1808–1841 (KLYHLPPPSVGPHSTASPPEDRTVKDSTPNSLDS). At Ser1179 the chain carries Phosphoserine. The segment covering 1179-1198 (SSDSISSLNSITSHSSIGSS) has biased composition (low complexity). Over residues 1244–1259 (PDSSAPSSPKLQHGST) the composition is skewed to polar residues. A compositionally biased stretch (low complexity) spans 1260–1281 (ETASPSIKSSTSSSVGTEVTET). A Phosphoserine modification is found at Ser1263. Residues 1301 to 1360 (EKKEVSELRSELWEKEMKLTDIRLEALNSAHQLDQLRETMHNMQLEVDLLKAENDRLKVA) adopt a coiled-coil conformation. A compositionally biased stretch (polar residues) spans 1365–1381 (SGCTPGQVPGSSALSSP). Phosphoserine is present on Ser1380.

It belongs to the Nav/unc-53 family. As to quaternary structure, interacts with tubulin. As to expression, expressed in heart and brain. Present in brain (at protein level). In adult brain, found almost exclusively in areas of secondary neurogenesis from the hippocampus and the subventricular zone.

It is found in the cytoplasm. Its subcellular location is the cytoskeleton. In terms of biological role, may be involved in neuronal migration. This chain is Neuron navigator 1 (Nav1), found in Mus musculus (Mouse).